We begin with the raw amino-acid sequence, 941 residues long: MutS protein homolog 1 (941 aa).

747–754 (GPNMAGKS) provides a ligand contact to ATP.

It belongs to the DNA mismatch repair MutS family.

It localises to the cytoplasm. The protein resides in the mitochondrion. Its function is as follows. Involved in mitochondrial DNA repair. In Schizosaccharomyces pombe (strain 972 / ATCC 24843) (Fission yeast), this protein is MutS protein homolog 1 (msh1).